Consider the following 376-residue polypeptide: Thymidine kinase (376 aa).

Positions 1 to 44 (MASYPGHQHASAFDQAARSRGHSNRRTALRPRRQQEATEVRPEQ) are disordered. Residues 19–32 (SRGHSNRRTALRPR) are compositionally biased toward basic residues. Over residues 33-44 (RQQEATEVRPEQ) the composition is skewed to basic and acidic residues. 56–63 (GPHGMGKT) is an ATP binding site. Catalysis depends on E83, which acts as the Proton acceptor. The substrate site is built by Y101 and Q125. R216 is a binding site for ATP. R222 serves as a coordination point for substrate. A disordered region spans residues 260–280 (GQLSGTAVPPQGAEPQSNAGP).

The protein belongs to the herpesviridae thymidine kinase family. In terms of assembly, homodimer.

It carries out the reaction thymidine + ATP = dTMP + ADP + H(+). Its function is as follows. Catalyzes the transfer of the gamma-phospho group of ATP to thymidine to generate dTMP in the salvage pathway of pyrimidine synthesis. The dTMP serves as a substrate for DNA polymerase during viral DNA replication. Allows the virus to be reactivated and to grow in non-proliferative cells lacking a high concentration of phosphorylated nucleic acid precursors. The sequence is that of Thymidine kinase from Human herpesvirus 1 (strain SC16) (HHV-1).